A 346-amino-acid polypeptide reads, in one-letter code: Methylthioribose-1-phosphate isomerase (346 aa).

Residues 48 to 50 (RGA), arginine 91, and glutamine 200 each bind substrate. Aspartate 241 acts as the Proton donor in catalysis. 251 to 252 (NK) is a binding site for substrate.

This sequence belongs to the eIF-2B alpha/beta/delta subunits family. MtnA subfamily.

It carries out the reaction 5-(methylsulfanyl)-alpha-D-ribose 1-phosphate = 5-(methylsulfanyl)-D-ribulose 1-phosphate. Its pathway is amino-acid biosynthesis; L-methionine biosynthesis via salvage pathway; L-methionine from S-methyl-5-thio-alpha-D-ribose 1-phosphate: step 1/6. Catalyzes the interconversion of methylthioribose-1-phosphate (MTR-1-P) into methylthioribulose-1-phosphate (MTRu-1-P). The polypeptide is Methylthioribose-1-phosphate isomerase (Picosynechococcus sp. (strain ATCC 27264 / PCC 7002 / PR-6) (Agmenellum quadruplicatum)).